Consider the following 270-residue polypeptide: NAD kinase (270 aa).

Asp45 functions as the Proton acceptor in the catalytic mechanism. Residues Asp45 to Gly46, Asn121 to Glu122, Arg147, Asp149, Thr160 to Ser165, and Ala184 contribute to the NAD(+) site.

This sequence belongs to the NAD kinase family. Requires a divalent metal cation as cofactor.

Its subcellular location is the cytoplasm. It catalyses the reaction NAD(+) + ATP = ADP + NADP(+) + H(+). Its function is as follows. Involved in the regulation of the intracellular balance of NAD and NADP, and is a key enzyme in the biosynthesis of NADP. Catalyzes specifically the phosphorylation on 2'-hydroxyl of the adenosine moiety of NAD to yield NADP. This is NAD kinase from Limosilactobacillus reuteri subsp. reuteri (strain JCM 1112) (Lactobacillus reuteri).